The primary structure comprises 139 residues: Dehydrin DHN1 (139 aa).

The disordered stretch occupies residues 1 to 139 (MEYQGQHGHA…IKEKLPGGQH (139 aa)). The segment covering 23 to 42 (GHGGFTGGPTGTHGAAGVGG) has biased composition (gly residues). Residues 49–58 (RDGHKTDGVL) show a composition bias toward basic and acidic residues. Over residues 59 to 68 (RRSGSSSSSS) the composition is skewed to low complexity. Residues 83 to 98 (KEKIKEKLPGGAHKDA) show a composition bias toward basic and acidic residues. Over residues 99–109 (AGQQQQTAMAG) the composition is skewed to low complexity. Over residues 120–139 (TGEKKGVMDKIKEKLPGGQH) the composition is skewed to basic and acidic residues.

It belongs to the plant dehydrin family.

This Hordeum vulgare (Barley) protein is Dehydrin DHN1 (DHN1).